The following is a 429-amino-acid chain: Glutamate-1-semialdehyde 2,1-aminomutase (429 aa).

Position 267 is an N6-(pyridoxal phosphate)lysine (K267).

The protein belongs to the class-III pyridoxal-phosphate-dependent aminotransferase family. HemL subfamily. Homodimer. Requires pyridoxal 5'-phosphate as cofactor.

It is found in the cytoplasm. The catalysed reaction is (S)-4-amino-5-oxopentanoate = 5-aminolevulinate. It participates in porphyrin-containing compound metabolism; protoporphyrin-IX biosynthesis; 5-aminolevulinate from L-glutamyl-tRNA(Glu): step 2/2. In Xanthomonas euvesicatoria pv. vesicatoria (strain 85-10) (Xanthomonas campestris pv. vesicatoria), this protein is Glutamate-1-semialdehyde 2,1-aminomutase.